Here is a 532-residue protein sequence, read N- to C-terminus: Glutamate--cysteine ligase (532 aa).

This sequence belongs to the glutamate--cysteine ligase type 1 family. Type 1 subfamily.

The enzyme catalyses L-cysteine + L-glutamate + ATP = gamma-L-glutamyl-L-cysteine + ADP + phosphate + H(+). It functions in the pathway sulfur metabolism; glutathione biosynthesis; glutathione from L-cysteine and L-glutamate: step 1/2. This chain is Glutamate--cysteine ligase, found in Pseudomonas fluorescens (strain Pf0-1).